The chain runs to 394 residues: Putative FNIP repeat-containing protein R636 (394 aa).

FNIP repeat units follow at residues 126-167, 168-207, and 210-250; these read FNKS…FSVY, FDQP…LYFG, and FNQP…IFEA.

The chain is Putative FNIP repeat-containing protein R636 from Acanthamoeba polyphaga mimivirus (APMV).